The primary structure comprises 360 residues: Serine/threonine transporter SstT (360 aa).

9 consecutive transmembrane segments (helical) span residues 17-37, 40-60, 78-98, 138-158, 179-199, 212-232, 295-315, 316-336, and 339-359; these read IGIGVVLGVLLGLIAPKITVI, FGSLFVGALKAIAPLLVLTLV, VICLYLFGTFAAAFIAVGASY, ALATANYIGVLTWAAVFGLAF, VVGWIIGLAPFGIMGLVFDTI, LLLLLLVGSMIFVALVVNPLI, MAGAAITINILTMAAVHTLGI, SVDFSSALLLSVVASLSAAGA, and VAGGSLLLIPVACSLFVVPYV.

This sequence belongs to the dicarboxylate/amino acid:cation symporter (DAACS) (TC 2.A.23) family.

It localises to the cell membrane. The enzyme catalyses L-serine(in) + Na(+)(in) = L-serine(out) + Na(+)(out). It carries out the reaction L-threonine(in) + Na(+)(in) = L-threonine(out) + Na(+)(out). In terms of biological role, involved in the import of serine and threonine into the cell, with the concomitant import of sodium (symport system). The polypeptide is Serine/threonine transporter SstT (Streptococcus suis (strain 05ZYH33)).